A 440-amino-acid chain; its full sequence is Elongation factor 1-alpha (440 aa).

The tr-type G domain maps to 5 to 228 (KPHINLVVIG…ALDTYIQPPK (224 aa)). The interval 14-21 (GHVDHGKS) is G1. Residue 14–21 (GHVDHGKS) participates in GTP binding. A Mg(2+)-binding site is contributed by Ser-21. The segment at 70 to 74 (GVTID) is G2. Positions 91 to 94 (DAPG) are G3. GTP-binding positions include 91–95 (DAPGH) and 153–156 (NKMD). Residues 153–156 (NKMD) are G4. Residues 194–196 (SAW) form a G5 region.

This sequence belongs to the TRAFAC class translation factor GTPase superfamily. Classic translation factor GTPase family. EF-Tu/EF-1A subfamily.

The protein localises to the cytoplasm. The catalysed reaction is GTP + H2O = GDP + phosphate + H(+). In terms of biological role, GTP hydrolase that promotes the GTP-dependent binding of aminoacyl-tRNA to the A-site of ribosomes during protein biosynthesis. This Hyperthermus butylicus (strain DSM 5456 / JCM 9403 / PLM1-5) protein is Elongation factor 1-alpha.